A 541-amino-acid chain; its full sequence is Membrane protein insertase YidC (541 aa).

Helical transmembrane passes span 6–26 (FFLI…WEIT), 356–376 (IIHS…LAFY), 430–450 (LPIL…LEMV), 463–483 (LSAP…MFIQ), and 498–518 (IMMA…SGLV).

Belongs to the OXA1/ALB3/YidC family. Type 1 subfamily. As to quaternary structure, interacts with the Sec translocase complex via SecD. Specifically interacts with transmembrane segments of nascent integral membrane proteins during membrane integration.

It is found in the cell inner membrane. In terms of biological role, required for the insertion and/or proper folding and/or complex formation of integral membrane proteins into the membrane. Involved in integration of membrane proteins that insert both dependently and independently of the Sec translocase complex, as well as at least some lipoproteins. Aids folding of multispanning membrane proteins. This is Membrane protein insertase YidC from Vesicomyosocius okutanii subsp. Calyptogena okutanii (strain HA).